The following is a 133-amino-acid chain: T-cell receptor beta chain V region 86T1 (133 aa).

Positions 1–21 (MSCRLLLYVSLCLVETALMNT) are cleaved as a signal peptide. The interval 22–113 (KITQSPRYLI…SAVYFCASSH (92 aa)) is v segment. N-linked (GlcNAc...) asparagine glycans are attached at residues Asn36 and Asn75. Residues Cys41 and Cys109 are joined by a disulfide bond. The tract at residues 114–133 (GQGVSGNTLYFGEGSRLIVV) is j segment.

In Mus musculus (Mouse), this protein is T-cell receptor beta chain V region 86T1.